We begin with the raw amino-acid sequence, 341 residues long: Putative gustatory receptor 9a (341 aa).

Met1 is a topological domain (cytoplasmic). A helical transmembrane segment spans residues 2 to 22 (SLWLEHFLTGYFQLCGLVCGW). Residues 23–30 (SGSRLGRL) are Extracellular-facing. Residues 31 to 51 (LSSTFLVLILIELVGEIETYF) traverse the membrane as a helical segment. At 52–68 (TEENPDNESVPAYFAKV) the chain is on the cytoplasmic side. The chain crosses the membrane as a helical span at residues 69-89 (IMGVNMAYKMIHAWIALSALF). At 90 to 113 (ECRRFRYLLEELPPVKATSFIYRH) the chain is on the extracellular side. The helical transmembrane segment at 114–134 (LILEIILFACNAFLVLSEYTI) threads the bilayer. The Cytoplasmic portion of the chain corresponds to 135–202 (RGIYLENLRY…LAKVTRSLSH (68 aa)). The chain crosses the membrane as a helical span at residues 203-223 (LFGLSLLLLNVLCLGDWIIVC). The Extracellular portion of the chain corresponds to 224–233 (NVYFMVAYLQ). A helical transmembrane segment spans residues 234-254 (VLPATLFLFGQVMFVVCPTLI). Residues 255-318 (KIWSICAASH…GIYHLNLQTL (64 aa)) are Cytoplasmic-facing. A helical transmembrane segment spans residues 319–339 (AGMFFFILEALVIFLQFVSLV). Over 340–341 (RT) the chain is Extracellular.

The protein belongs to the insect chemoreceptor superfamily. Gustatory receptor (GR) family. Gr2a subfamily. As to expression, expressed in neurons of the terminal external chemosensory organ of larvae.

It localises to the cell membrane. Functionally, probable gustatory receptor which mediates acceptance or avoidance behavior, depending on its substrates. In Drosophila melanogaster (Fruit fly), this protein is Putative gustatory receptor 9a (Gr9a).